A 401-amino-acid polypeptide reads, in one-letter code: Type I restriction enzyme EcoprrI specificity subunit (401 aa).

The protein belongs to the type-I restriction system S methylase family. In terms of assembly, the type I restriction/modification system is composed of three polypeptides R, M and S; the restriction enzyme has stoichiometry R(2)M(2)S(1) while the methyltransferase is M(2)S(1).

The specificity (S) subunit of a type I restriction enzyme; this subunit dictates DNA sequence specificity. The M and S subunits together form a methyltransferase (MTase) that methylates two adenine residues of the sequence 5'-CCAN(7)ATGC-3'. In the presence of the R subunit the complex can also act as an endonuclease, binding to the same target sequence but cutting the DNA some distance from this site. Whether the DNA is cut or modified depends on the methylation state of the target sequence. When the target site is unmodified, the DNA is cut. When the target site is hemimethylated, the complex acts as a maintenance MTase modifying the DNA so that both strands become methylated. After locating a non-methylated recognition site, the enzyme complex serves as a molecular motor that translocates DNA in an ATP-dependent manner until a collision occurs that triggers cleavage. This Escherichia coli protein is Type I restriction enzyme EcoprrI specificity subunit (prrB).